The sequence spans 497 residues: Succinate-semialdehyde dehydrogenase [NADP(+)] (497 aa).

The active-site Proton acceptor is glutamate 264. Cysteine 298 (nucleophile) is an active-site residue.

Belongs to the aldehyde dehydrogenase family. In terms of assembly, homotetramer.

It is found in the cytoplasm. The catalysed reaction is succinate semialdehyde + NAD(+) + H2O = succinate + NADH + 2 H(+). It carries out the reaction succinate semialdehyde + NADP(+) + H2O = succinate + NADPH + 2 H(+). It participates in amino-acid degradation; 4-aminobutanoate degradation. Inhibited by AMP, ADP anf ATP. Its function is as follows. Catalyzes the oxidation of succinate semialdehyde to succinate. Can utilize both NAD(+) or NADP(+) as a coenzyme, but has a 2.5-fold lower activity with NADP(+) than with NAD(+). Functions in a gamma-aminobutyrate (GABA) degradation pathway that allows growth utilizing GABA as a nitrogen source. Functions in the GABA shunt, which allows to bypass 2 reactions in the TCA cycle by removing alpha-ketoglutarate from the cycle and feeding succinate and NADH back into the cycle. In Saccharomyces cerevisiae (strain ATCC 204508 / S288c) (Baker's yeast), this protein is Succinate-semialdehyde dehydrogenase [NADP(+)].